A 202-amino-acid chain; its full sequence is Glycerol-3-phosphate acyltransferase (202 aa).

5 helical membrane passes run 3–23 (ILLA…VVVS), 51–71 (KAAI…VWLV), 74–94 (FGIG…LGHL), 116–136 (AVHP…AFFF), and 140–160 (SLAA…LFGT).

It belongs to the PlsY family. In terms of assembly, probably interacts with PlsX.

The protein resides in the cell inner membrane. The enzyme catalyses an acyl phosphate + sn-glycerol 3-phosphate = a 1-acyl-sn-glycero-3-phosphate + phosphate. Its pathway is lipid metabolism; phospholipid metabolism. In terms of biological role, catalyzes the transfer of an acyl group from acyl-phosphate (acyl-PO(4)) to glycerol-3-phosphate (G3P) to form lysophosphatidic acid (LPA). This enzyme utilizes acyl-phosphate as fatty acyl donor, but not acyl-CoA or acyl-ACP. This is Glycerol-3-phosphate acyltransferase from Burkholderia thailandensis (strain ATCC 700388 / DSM 13276 / CCUG 48851 / CIP 106301 / E264).